Here is a 4621-residue protein sequence, read N- to C-terminus: Dynein axonemal heavy chain 5 (4621 aa).

A stem region spans residues 1-1938 (MFRIGRRQLW…MIHITDVAFI (1938 aa)). Coiled coils occupy residues 260 to 305 (WIKQ…DQLK) and 803 to 825 (LENAFAKIKDLELLLDRVNDLIE). Residues 901–921 (VCHENASPSGNTSGRREGHSE) form a disordered region. Coiled coils occupy residues 1065 to 1094 (AVKNNEDSDSDAEVEENELQETLEIASINL) and 1433 to 1462 (DVNIEKINNELLEFQNRCRKLPRALKDWQA). AAA regions lie at residues 1939–2161 (YQNE…VLRT), 2221–2440 (TAIS…IQNL), 2547–2800 (VYPP…IWQG), and 2913–3167 (LYNE…FRRS). ATP contacts are provided by residues 1977 to 1984 (GPAGTGKT) and 2259 to 2266 (GPSGSGKT). Residues 3182–3479 (YKFIYEEKHM…QTLLEDADRC (298 aa)) form a stalk region. Coiled coils occupy residues 3186–3299 (YEEK…QTIK), 3423–3490 (LKAN…STLI), and 3729–3814 (ILTE…EEYR). AAA stretches follow at residues 3564–3794 (LIDA…EVTQ) and 4009–4223 (ARKY…FIQN). A coiled-coil region spans residues 4389-4417 (FLRQEIDRMQRVLSLVRSTLTELKLAVDG).

This sequence belongs to the dynein heavy chain family. Interacts with DNAL1. Consists of at least two heavy chains and a number of intermediate and light chains. As to expression, strongly expressed in lung and kidney and weaker expression seen in brain, heart and testis. In the brain, expressed in ependymal cells lining the brain ventricles and the aqueduct.

The protein localises to the cytoplasm. It is found in the cytoskeleton. The protein resides in the cilium axoneme. In terms of biological role, force generating protein of respiratory cilia. Produces force towards the minus ends of microtubules. Dynein has ATPase activity; the force-producing power stroke is thought to occur on release of ADP. Required for structural and functional integrity of the cilia of ependymal cells lining the brain ventricles. The polypeptide is Dynein axonemal heavy chain 5 (Mus musculus (Mouse)).